We begin with the raw amino-acid sequence, 332 residues long: MNVSKARITAIGSYVPERRLTNDDLEKMVDTNDEWIVKRTGIRERRIAADDEFTSDIGYKAVQDLIARYEKSVDDVDMIIVCTFTPDFKTPSAASLIQAKLGIQNTGAIDLNAACAGFTYGLHMANGLISSGLHRKILVIGAETISKVTDYTDRTTCILFGDGAGAVLVEYDENEPSFVSFNLGSEGERANKLYCTGLAEQMNGEELVNTGNLVQSGREVYKWAVNTVPAGMKAVLEKAAMKRNEIDWFVPHSANLRMIESICDKSGIPLEQTLYSLVQYGNTSSATIPLALDIGVREGKLKHGDNVLLYGFGGGLAHAGLILRWTVPTEKN.

Catalysis depends on residues C115 and H252. Positions 253–257 (SANLR) are ACP-binding. The active site involves N282.

This sequence belongs to the thiolase-like superfamily. FabH family. As to quaternary structure, homodimer.

It localises to the cytoplasm. It carries out the reaction malonyl-[ACP] + acetyl-CoA + H(+) = 3-oxobutanoyl-[ACP] + CO2 + CoA. Its pathway is lipid metabolism; fatty acid biosynthesis. Its function is as follows. Catalyzes the condensation reaction of fatty acid synthesis by the addition to an acyl acceptor of two carbons from malonyl-ACP. Catalyzes the first condensation reaction which initiates fatty acid synthesis and may therefore play a role in governing the total rate of fatty acid production. Possesses both acetoacetyl-ACP synthase and acetyl transacylase activities. Its substrate specificity determines the biosynthesis of branched-chain and/or straight-chain of fatty acids. The sequence is that of Beta-ketoacyl-[acyl-carrier-protein] synthase III 2 from Halalkalibacterium halodurans (strain ATCC BAA-125 / DSM 18197 / FERM 7344 / JCM 9153 / C-125) (Bacillus halodurans).